The chain runs to 351 residues: Protein IQ-DOMAIN 27 (351 aa).

The disordered stretch occupies residues 15 to 37 (KKSKDRSHVSGGDSVKGGDHSGD). The calmodulin-binding stretch occupies residues 98–114 (EERWAAVKIQKVFRGSL). IQ domains lie at 99-127 (ERWA…GIVK) and 128-150 (LQAL…SIQT). The Nuclear localization signal signature appears at 191-198 (DRRTKIVE). The span at 299–310 (SFKAKVRSHSAP) shows a compositional bias: basic residues. A disordered region spans residues 299 to 351 (SFKAKVRSHSAPRQRSERQRLSLDEVMASKSSVSGVSMSHQHPPRHSCSCDPL). Residues 312-321 (QRSERQRLSL) show a composition bias toward basic and acidic residues. Residues 324–337 (VMASKSSVSGVSMS) show a composition bias toward low complexity.

Belongs to the IQD family. Binds to multiple calmodulin (CaM) in the presence of Ca(2+) and CaM-like proteins.

The protein resides in the nucleus. Its subcellular location is the nucleus envelope. It is found in the cytoplasm. The protein localises to the cytoskeleton. Its function is as follows. May be involved in cooperative interactions with calmodulins or calmodulin-like proteins. Recruits calmodulin proteins to microtubules, thus being a potential scaffold in cellular signaling and trafficking. May associate with nucleic acids and regulate gene expression at the transcriptional or post-transcriptional level. This is Protein IQ-DOMAIN 27 from Arabidopsis thaliana (Mouse-ear cress).